A 189-amino-acid chain; its full sequence is MNKDILTQNYAVALFDNAKSDNTQDKILEEVNLVTSIIEDNIEVKELLSSPIVNKVDKIGVINSLVKNIKISKIMQNFLLLLIKNSRTSILADIANTYSKLLYESKNIKIVQVISANKLKPTEQEWVKTNIEKELKQETKINFEIDPTIMGGIVIKYDSILQDYSIKGSLDKIAKALQSVNVFDCHPVA.

The protein belongs to the ATPase delta chain family. In terms of assembly, F-type ATPases have 2 components, F(1) - the catalytic core - and F(0) - the membrane proton channel. F(1) has five subunits: alpha(3), beta(3), gamma(1), delta(1), epsilon(1). F(0) has three main subunits: a(1), b(2) and c(10-14). The alpha and beta chains form an alternating ring which encloses part of the gamma chain. F(1) is attached to F(0) by a central stalk formed by the gamma and epsilon chains, while a peripheral stalk is formed by the delta and b chains.

It is found in the cell inner membrane. F(1)F(0) ATP synthase produces ATP from ADP in the presence of a proton or sodium gradient. F-type ATPases consist of two structural domains, F(1) containing the extramembraneous catalytic core and F(0) containing the membrane proton channel, linked together by a central stalk and a peripheral stalk. During catalysis, ATP synthesis in the catalytic domain of F(1) is coupled via a rotary mechanism of the central stalk subunits to proton translocation. Its function is as follows. This protein is part of the stalk that links CF(0) to CF(1). It either transmits conformational changes from CF(0) to CF(1) or is implicated in proton conduction. The polypeptide is ATP synthase subunit delta (Rickettsia bellii (strain OSU 85-389)).